We begin with the raw amino-acid sequence, 113 residues long: UPF0342 protein spyM18_0873 (113 aa).

The protein belongs to the UPF0342 family.

The sequence is that of UPF0342 protein spyM18_0873 from Streptococcus pyogenes serotype M18 (strain MGAS8232).